Reading from the N-terminus, the 232-residue chain is Leucyl/phenylalanyl-tRNA--protein transferase (232 aa).

This sequence belongs to the L/F-transferase family.

The protein localises to the cytoplasm. It catalyses the reaction N-terminal L-lysyl-[protein] + L-leucyl-tRNA(Leu) = N-terminal L-leucyl-L-lysyl-[protein] + tRNA(Leu) + H(+). The catalysed reaction is N-terminal L-arginyl-[protein] + L-leucyl-tRNA(Leu) = N-terminal L-leucyl-L-arginyl-[protein] + tRNA(Leu) + H(+). It carries out the reaction L-phenylalanyl-tRNA(Phe) + an N-terminal L-alpha-aminoacyl-[protein] = an N-terminal L-phenylalanyl-L-alpha-aminoacyl-[protein] + tRNA(Phe). In terms of biological role, functions in the N-end rule pathway of protein degradation where it conjugates Leu, Phe and, less efficiently, Met from aminoacyl-tRNAs to the N-termini of proteins containing an N-terminal arginine or lysine. The sequence is that of Leucyl/phenylalanyl-tRNA--protein transferase from Nitrosospira multiformis (strain ATCC 25196 / NCIMB 11849 / C 71).